Reading from the N-terminus, the 34-residue chain is Tryptophanase operon leader peptide (34 aa).

The sequence is that of Tryptophanase operon leader peptide (tnaL) from Proteus vulgaris.